A 324-amino-acid polypeptide reads, in one-letter code: MTAELKVASIDNHISSLSGEVSIPQAPPEFKSGFIGIIGRPNVGKSTLMNQLVGQKIAITSPVAQTTRNRLRGIVTTPEAQLIFVDTPGIHKPHHQLGEVLVKNAKLAIESVDVVLFVVDGAVACGAGDRFIADLLIHSKTPVILGINKVDQQPPDSQKIDESYQQLASAYQWPTVKFSAKTGAELPQLQELLVEHLEHGPYYYPPDLVTDQPERFIMGELIREQILLLTREEVPHSVAIAIDLVEETPTITRVLATIHVERDSQKGILIGKGGSMLKSIGSAAREQIQKLIAGKVYLELFVKVQPKWRHSRVRLAELGYRVEE.

An Era-type G domain is found at 31–199 (KSGFIGIIGR…QELLVEHLEH (169 aa)). The tract at residues 39–46 (GRPNVGKS) is G1. Residue 39-46 (GRPNVGKS) participates in GTP binding. Residues 65-69 (QTTRN) form a G2 region. The tract at residues 86-89 (DTPG) is G3. GTP-binding positions include 86–90 (DTPGI) and 148–151 (NKVD). Positions 148–151 (NKVD) are G4. A G5 region spans residues 178 to 180 (FSA). The 77-residue stretch at 230 to 306 (TREEVPHSVA…YLELFVKVQP (77 aa)) folds into the KH type-2 domain.

This sequence belongs to the TRAFAC class TrmE-Era-EngA-EngB-Septin-like GTPase superfamily. Era GTPase family. In terms of assembly, monomer.

It localises to the cytoplasm. It is found in the cell inner membrane. In terms of biological role, an essential GTPase that binds both GDP and GTP, with rapid nucleotide exchange. Plays a role in 16S rRNA processing and 30S ribosomal subunit biogenesis and possibly also in cell cycle regulation and energy metabolism. In Nostoc sp. (strain PCC 7120 / SAG 25.82 / UTEX 2576), this protein is GTPase Era.